The primary structure comprises 298 residues: tRNA pseudouridine synthase B (298 aa).

Residue Asp-39 is the Nucleophile of the active site.

This sequence belongs to the pseudouridine synthase TruB family. Type 1 subfamily.

It carries out the reaction uridine(55) in tRNA = pseudouridine(55) in tRNA. Its function is as follows. Responsible for synthesis of pseudouridine from uracil-55 in the psi GC loop of transfer RNAs. The sequence is that of tRNA pseudouridine synthase B from Oenococcus oeni (strain ATCC BAA-331 / PSU-1).